Here is a 244-residue protein sequence, read N- to C-terminus: Troponin I, cardiac muscle (244 aa).

Over residues 1–25 the composition is skewed to acidic residues; sequence MSDEEEVTYEEEEEEYVEEEEEEVV. Residues 1-67 form a disordered region; that stretch reads MSDEEEVTYE…PQVKRKPKIS (67 aa). Serine 2 bears the N-acetylserine mark. Serine 2 carries the post-translational modification Phosphoserine; by CK2. Residues 27-42 show a composition bias toward pro residues; it reads PEPPKPAPPPAAPPPL.

This sequence belongs to the troponin I family. As to quaternary structure, binds to actin and tropomyosin. As to expression, heart.

In terms of biological role, troponin I is the inhibitory subunit of troponin, the thin filament regulatory complex which confers calcium-sensitivity to striated muscle actomyosin ATPase activity. The sequence is that of Troponin I, cardiac muscle (tnni3) from Xenopus laevis (African clawed frog).